A 432-amino-acid chain; its full sequence is 3-phosphoshikimate 1-carboxyvinyltransferase (432 aa).

3 residues coordinate 3-phosphoshikimate: lysine 22, serine 23, and arginine 27. Position 22 (lysine 22) interacts with phosphoenolpyruvate. The phosphoenolpyruvate site is built by glycine 96 and arginine 127. 3-phosphoshikimate contacts are provided by serine 173, serine 174, glutamine 175, serine 201, aspartate 316, asparagine 339, and lysine 343. Glutamine 175 provides a ligand contact to phosphoenolpyruvate. Residue aspartate 316 is the Proton acceptor of the active site. Phosphoenolpyruvate-binding residues include arginine 347, arginine 391, and lysine 416.

It belongs to the EPSP synthase family. Monomer.

It is found in the cytoplasm. It carries out the reaction 3-phosphoshikimate + phosphoenolpyruvate = 5-O-(1-carboxyvinyl)-3-phosphoshikimate + phosphate. It functions in the pathway metabolic intermediate biosynthesis; chorismate biosynthesis; chorismate from D-erythrose 4-phosphate and phosphoenolpyruvate: step 6/7. Its function is as follows. Catalyzes the transfer of the enolpyruvyl moiety of phosphoenolpyruvate (PEP) to the 5-hydroxyl of shikimate-3-phosphate (S3P) to produce enolpyruvyl shikimate-3-phosphate and inorganic phosphate. This is 3-phosphoshikimate 1-carboxyvinyltransferase from Haemophilus influenzae (strain ATCC 51907 / DSM 11121 / KW20 / Rd).